We begin with the raw amino-acid sequence, 234 residues long: Chalcone--flavanone isomerase 1 (234 aa).

Substrate-binding residues include Thr50, Asn115, and Ser192.

It belongs to the chalcone isomerase family.

The catalysed reaction is a chalcone = a flavanone.. Its pathway is secondary metabolite biosynthesis; flavonoid biosynthesis. Catalyzes the intramolecular cyclization of bicyclic chalcones into tricyclic (S)-flavanones. Responsible for the isomerization of 4,2',4',6'-tetrahydroxychalcone (also termed chalcone) into naringenin. The polypeptide is Chalcone--flavanone isomerase 1 (CHI1) (Vitis vinifera (Grape)).